Reading from the N-terminus, the 1220-residue chain is Post-transcriptional regulator MKT1L (1220 aa).

The segment at 1 to 107 (MRKAGANRNN…SPWNSPPQQT (107 aa)) is disordered. A compositionally biased stretch (basic residues) spans 34-70 (PHHHQHQHHHQHQHQHQHQHQHPHQHPHQHHHHHPHH).

It belongs to the XPG/RAD2 endonuclease family. As to quaternary structure, forms a complex composed of at least MKT1L, PBP1, XAC1 and LSM12.

The protein resides in the cytoplasm. Its function is as follows. Involved in post-transcriptional regulation of gene expression. In Trypanosoma brucei brucei (strain 927/4 GUTat10.1), this protein is Post-transcriptional regulator MKT1L.